A 114-amino-acid chain; its full sequence is UPF0757 protein YmgG (114 aa).

The protein belongs to the UPF0757 family.

The sequence is that of UPF0757 protein YmgG from Edwardsiella ictaluri (strain 93-146).